The sequence spans 535 residues: Secreted lipase 5 (535 aa).

Positions 1-17 (MHLKSLLLAALPLLLEA) are cleaved as a signal peptide. N-linked (GlcNAc...) asparagine glycosylation is found at asparagine 32 and asparagine 119. Serine 241 serves as the catalytic Acyl-ester intermediate. Asparagine 282, asparagine 341, asparagine 347, and asparagine 432 each carry an N-linked (GlcNAc...) asparagine glycan.

This sequence belongs to the type-B carboxylesterase/lipase family.

It is found in the secreted. It carries out the reaction a carboxylic ester + H2O = an alcohol + a carboxylate + H(+). Secreted lipase involved in plant virulence. Has a substrate preference for p-nitrophenyl esters with a carbon chain length of C8 (p-nitrophenyl caprylate). This chain is Secreted lipase 5, found in Gibberella zeae (strain ATCC MYA-4620 / CBS 123657 / FGSC 9075 / NRRL 31084 / PH-1) (Wheat head blight fungus).